The chain runs to 633 residues: Sodium- and chloride-dependent glycine transporter 1 (633 aa).

The Cytoplasmic segment spans residues 1-30 (MGLCVNGAVPSEATKKDENLKRGNWGNQIE). 3 helical membrane passes run 31–51 (FVLT…FPYL), 58–78 (GAFM…LFFM), and 113–133 (YIGI…FASM). Residues 134 to 208 (NRVLPWTYCN…ISEDIGDFGE (75 aa)) lie on the Extracellular side of the membrane. Asn158, Asn164, Asn173, and Asn179 each carry an N-linked (GlcNAc...) asparagine glycan. The next 9 membrane-spanning stretches (helical) occupy residues 209–229 (VQLP…LCLI), 238–258 (VVYF…IRGI), 283–303 (VWGD…GGLI), 330–350 (SVYA…HLGV), 373–393 (LLPI…LLGL), 429–449 (IIGF…WLLL), 453–473 (YAAS…VMYI), 493–513 (LFFQ…ILIF), and 533–553 (ITIG…YAIF). Topologically, residues 554 to 633 (KIWCSEGDTF…GQAHTQDSKV (80 aa)) are cytoplasmic. The interval 588–633 (RYAQMSSTRSESNPEAQPLNPEKMKEDLSLTIQGSNGQAHTQDSKV) is disordered. Polar residues-rich tracts occupy residues 591 to 602 (QMSSTRSESNPE) and 617 to 633 (LTIQ…DSKV).

Belongs to the sodium:neurotransmitter symporter (SNF) (TC 2.A.22) family. SLC6A9 subfamily. First expressed in early tailbud stage embryos in the midbrain and anterior spinal cord, and weakly in the hindbrain. By late tailbud stages, expression extends posteriorly in the spinal cord to appear in between somites. Expressed in the forebrain, retina, between the somites and in the blood islands by the swimming tadpole stages.

The protein resides in the cell membrane. It carries out the reaction glycine(out) + chloride(out) + 2 Na(+)(out) = glycine(in) + chloride(in) + 2 Na(+)(in). Functionally, sodium- and chloride-dependent glycine transporter which is essential for regulating glycine concentrations at inhibitory glycinergic synapses. In Xenopus laevis (African clawed frog), this protein is Sodium- and chloride-dependent glycine transporter 1.